The sequence spans 197 residues: Dephospho-CoA kinase (197 aa).

The 196-residue stretch at 2–197 (IIGLTGGIAS…GAIKDLANLV (196 aa)) folds into the DPCK domain. 10-15 (ASGKST) provides a ligand contact to ATP.

It belongs to the CoaE family.

The protein localises to the cytoplasm. It carries out the reaction 3'-dephospho-CoA + ATP = ADP + CoA + H(+). The protein operates within cofactor biosynthesis; coenzyme A biosynthesis; CoA from (R)-pantothenate: step 5/5. Catalyzes the phosphorylation of the 3'-hydroxyl group of dephosphocoenzyme A to form coenzyme A. The sequence is that of Dephospho-CoA kinase from Streptococcus thermophilus (strain ATCC BAA-250 / LMG 18311).